A 1115-amino-acid polypeptide reads, in one-letter code: MLPLEHKASGRVQATGRGVRASVELSSVLPQQRAAQLQHQKCNTGARLGRDPRRGVDAERTLVCTAATTASVPSTSGASPSGSQLSSKALRPRRFSAPVIARLLRSTTTVQELADLVQQQSLYMDSSHVGIAMLHLALLVSRAEQQAAAQLQLQLAAKQAATRRAGSGASTSGRARGWGSGPGRNGSGSSSVSVNGSGSSSNGSSSSSSSLAMGMQLSMASIGDDVVSGVNAGPVPSGGADALLDLEMSSILDDDDGAGARQLQQMSDDLAAGLEAAATTTAAPEAGVAAAGGTGAGAAADAAASSSAPSLVAAAAAAAAAAASPASSPDVARTLRTLLSRAFSLGLDSLSGPQLAAVFTGLAVLRRPRQQQQQQQQAGAAGAGANAGAGGVGGVGVSAGDRLVAEQLLAAMGPKLYECRPQDLANTLASVALLGLPPDADLRTSFYAAVRQQQRRFGPRELATTLWAYGAMGTYVQEDAVQLVLELSRARLTSFSPLQLAKAVQGLAALRYRPSPEWVEAYCSVLRPALRRMSSRELCAVLLALASLQVGLDGGTRAALLVHTFSGPLPGMAPGEVALSLWALGRLSAVDMDLPALIDLDMSGRVLDLTSRLLAAGGFSGGELQQLLEGLTRLALQPPLEWMQAFVAALQPQLDKLDAQQLAGVLNSLAAQQYRPQPQMQEVVLAATQANMKQLLADTTCSAALLTALRRLNIEPPPGWVGALLEESRSALKNRCTDLHLANLAGSLAAWGVRPDGRWAARLMWRSQVLMNEDRMSPRALVALLQAMVSLGLSPNPVWTQLCLQAAVRRASQPAFEPHHYGTLMASLHALGIQPPQEWLTRMLLSTYRCWDRFSVTHWSSLLPALVLLKARPPREWLRRFEATSAARLADCSALQLLTLAVSLAQLHQLHAAGAVADTPLLLPGAAAAAAAAAPAGASSAAAAGDSPAALSAVPAAAGDGALVPSFMSIDDDGTAAVAAAATALAAAEPAAHAATSTTTATAVAHPQPQLLPQAQALPQPGPEWQAAWWAASTRLLLRVRYAPSELVLTAGWLGSLGLRPPPEWLQACAEVAARYSKVMDAAERQQLAAAVAPLALEAVAPPSAPPAGAASTAH.

2 stretches are compositionally biased toward low complexity: residues 69-87 (TASV…QLSS) and 163-175 (RRAG…SGRA). 2 disordered regions span residues 69–90 (TASV…SKAL) and 163–210 (RRAG…SSSS). Gly residues predominate over residues 176-186 (RGWGSGPGRNG). The span at 187–210 (SGSSSVSVNGSGSSSNGSSSSSSS) shows a compositional bias: low complexity. 9 tandem repeats follow at residues 483–521 (LVLE…WVEA), 607–645 (LDLT…WMQA), 685–723 (LAAT…WVGA), 724–763 (LLEE…AARL), 764–803 (MWRS…TQLC), 804–842 (LQAA…WLTR), 843–880 (MLLS…WLRR), 990–1029 (PAAH…QAAW), and 1030–1068 (WAAS…WLQA). The segment at 483–1068 (LVLELSRARL…LRPPPEWLQA (586 aa)) is 9 X 38 AA approximate repeats.

Part of a 400 kDa complex which is not stably associated with RNA.

The protein resides in the plastid. The protein localises to the chloroplast stroma. In terms of biological role, required for expression of the chloroplast encoded psbC mRNA, most likely for translation initiation. Interacts with the 5'-UTR of psbC. The polypeptide is Tbc2 translation factor, chloroplastic (TBC2) (Chlamydomonas reinhardtii (Chlamydomonas smithii)).